The sequence spans 1230 residues: Ubiquitin carboxyl-terminal hydrolase 15 (1230 aa).

In terms of domain architecture, MATH spans 39 to 179; that stretch reads EDSFTWNIPD…EGTLNITAYV (141 aa). Residues 205 to 536 form the USP domain; that stretch reads VGFRNQGATC…SAYMLVYIRQ (332 aa). Cys214 functions as the Nucleophile in the catalytic mechanism. Residue His465 is the Proton acceptor of the active site.

It belongs to the peptidase C19 family. In terms of assembly, interacts with PEX6; promoting association with the PEX1-PEX6 ATPase complex.

It is found in the cytoplasm. It localises to the cytosol. The protein localises to the peroxisome. The catalysed reaction is Thiol-dependent hydrolysis of ester, thioester, amide, peptide and isopeptide bonds formed by the C-terminal Gly of ubiquitin (a 76-residue protein attached to proteins as an intracellular targeting signal).. In terms of biological role, deubiquitinase involved in peroxisome import by mediating deubiquitination of the peroxisomal import receptor PEX5. Catalyzes deubiquitination of both monoubiquitiated and polyubiquitinated forms of PEX5 following its retrotranslocation into the cytosol, resetting PEX5 for a subsequent import cycle. This is Ubiquitin carboxyl-terminal hydrolase 15 from Saccharomyces cerevisiae (strain ATCC 204508 / S288c) (Baker's yeast).